The primary structure comprises 263 residues: Trans-aconitate 2-methyltransferase (263 aa).

It belongs to the methyltransferase superfamily. Tam family.

The protein resides in the cytoplasm. It catalyses the reaction trans-aconitate + S-adenosyl-L-methionine = (E)-3-(methoxycarbonyl)pent-2-enedioate + S-adenosyl-L-homocysteine. Functionally, catalyzes the S-adenosylmethionine monomethyl esterification of trans-aconitate. The sequence is that of Trans-aconitate 2-methyltransferase from Mycobacterium marinum (strain ATCC BAA-535 / M).